The primary structure comprises 1006 residues: Phosphatidylinositol 4,5-bisphosphate 5-phosphatase A (1006 aa).

The interval 1–416 is disordered; the sequence is MEGQSSRGSR…SSSPWSAQPT (416 aa). Over residues 27 to 41 the composition is skewed to polar residues; sequence VAQTGAPSKVDSSFQ. The residue at position 56 (R56) is an Asymmetric dimethylarginine; alternate. Omega-N-methylarginine; alternate is present on R56. R65 carries the omega-N-methylarginine modification. R76 bears the Asymmetric dimethylarginine mark. Residue R83 is modified to Asymmetric dimethylarginine; alternate. R83 bears the Omega-N-methylarginine; alternate mark. The span at 94–112 shows a compositional bias: polar residues; the sequence is GQKTATAHRSSSLAPTSVG. An RSXSXX motif 1 motif is present at residues 102–107; it reads RSSSLA. Residues 180-193 show a composition bias toward low complexity; that stretch reads LAASGLSLALASEE. A compositionally biased stretch (pro residues) spans 196–209; it reads PELPSTPSPVPSPV. Positions 210-234 are enriched in low complexity; the sequence is LSPTQEQALAPASTASGAASVGQTS. The segment covering 256–273 has biased composition (polar residues); the sequence is PAQTSGPTGSPPCIQTSP. Phosphoserine is present on residues S291 and S324. The segment covering 337-347 has biased composition (pro residues); the sequence is VPPPLPKPPRS. The SH3-binding signature appears at 345–350; sequence PRSPSR. 2 stretches are compositionally biased toward low complexity: residues 348–360 and 398–409; these read PSRS…NRSP and TTSSSTSTLSSS. The RSXSXX motif 2 signature appears at 350-355; sequence RSPSHS. Positions 425–728 are catalytic; the sequence is ITVVTWNVGT…SDHKPVAAQF (304 aa). The interval 729–840 is required for ruffle localization; that stretch reads LLQFAFRDDM…IGITEPFQIS (112 aa). The segment covering 844–858 has biased composition (low complexity); sequence SELASSSTDSSGTSS. The segment at 844–1006 is disordered; sequence SELASSSTDS…RGLEEGGLGP (163 aa). 2 consecutive short sequence motifs (RSXSXX motif) follow at residues 874-879 and 885-890; these read RSPSPG and RSRSPG. S903 is modified (phosphoserine). Positions 911-916 match the RSXSXX motif 5 motif; sequence RSPSPQ. Positions 927–946 are enriched in low complexity; the sequence is RSSNGSSRGSSEEGPSGLPG. Position 990 is a phosphoserine (S990).

Belongs to the inositol 1,4,5-trisphosphate 5-phosphatase type II family.

Its subcellular location is the cytoplasm. The enzyme catalyses 1D-myo-inositol 1,4,5-trisphosphate + H2O = 1D-myo-inositol 1,4-bisphosphate + phosphate. It catalyses the reaction 1D-myo-inositol 1,3,4,5-tetrakisphosphate + H2O = 1D-myo-inositol 1,3,4-trisphosphate + phosphate. The catalysed reaction is a 1,2-diacyl-sn-glycero-3-phospho-(1D-myo-inositol-4,5-bisphosphate) + H2O = a 1,2-diacyl-sn-glycero-3-phospho-(1D-myo-inositol 4-phosphate) + phosphate. Inositol 5-phosphatase, which converts inositol 1,4,5-trisphosphate to inositol 1,4-bisphosphate. Also converts phosphatidylinositol 4,5-bisphosphate to phosphatidylinositol 4-phosphate and inositol 1,3,4,5-tetrakisphosphate to inositol 1,3,4-trisphosphate in vitro. May be involved in modulation of the function of inositol and phosphatidylinositol polyphosphate-binding proteins that are present at membranes ruffles. The sequence is that of Phosphatidylinositol 4,5-bisphosphate 5-phosphatase A (INPP5J) from Homo sapiens (Human).